The sequence spans 548 residues: Phosphoglucomutase (548 aa).

Serine 135 acts as the Phosphoserine intermediate in catalysis. 4 residues coordinate Mg(2+): serine 135, aspartate 288, aspartate 290, and aspartate 292.

Belongs to the phosphohexose mutase family. Mg(2+) serves as cofactor.

The enzyme catalyses alpha-D-glucose 1-phosphate = alpha-D-glucose 6-phosphate. It functions in the pathway glycolipid metabolism; diglucosyl-diacylglycerol biosynthesis. Catalyzes the interconversion between glucose-6-phosphate and alpha-glucose-1-phosphate. This is the first step in the biosynthesis of diglucosyl-diacylglycerol (Glc2-DAG), i.e. a glycolipid found in the membrane, which is also used as a membrane anchor for lipoteichoic acid (LTA). The polypeptide is Phosphoglucomutase (pgcA) (Staphylococcus haemolyticus (strain JCSC1435)).